The primary structure comprises 53 residues: Large ribosomal subunit protein eL24 (53 aa).

Zn(2+) is bound by residues cysteine 4, cysteine 7, cysteine 30, and cysteine 34. A C4-type zinc finger spans residues 4–34 (CSFCNKEIEEGTGKMYVKKDGSIYFFCSSKC).

Belongs to the eukaryotic ribosomal protein eL24 family. As to quaternary structure, part of the 50S ribosomal subunit. Forms a cluster with proteins L3 and L14. Zn(2+) serves as cofactor.

Functionally, binds to the 23S rRNA. This is Large ribosomal subunit protein eL24 from Methanobrevibacter smithii (strain ATCC 35061 / DSM 861 / OCM 144 / PS).